The sequence spans 174 residues: Type II restriction enzyme Bsp6I (174 aa).

The catalysed reaction is Endonucleolytic cleavage of DNA to give specific double-stranded fragments with terminal 5'-phosphates.. In terms of biological role, a P subtype restriction enzyme that recognizes the double-stranded sequence 5'-GCNGC-3' and cleaves after C-2. This chain is Type II restriction enzyme Bsp6I, found in Bacillus sp. (strain RFL6).